The following is a 486-amino-acid chain: Elastin-binding protein EbpS (486 aa).

Residues 1–40 (MSNNFKDDFEKNRQSIDTNSHQDHTEDVEKDQSELEHQDT) are compositionally biased toward basic and acidic residues. The interval 1–314 (MSNNFKDDFE…NHDRDKERKK (314 aa)) is disordered. The Extracellular segment spans residues 2–204 (SNNFKDDFEK…ESKDHHSGKK (203 aa)). Residues 14 to 34 (QSIDTNSHQDHTEDVEKDQSE) form an elastin-binding region. A compositionally biased stretch (polar residues) spans 64–85 (TNHNKQVHNESQTSEDNVQNEA). Composition is skewed to basic and acidic residues over residues 103–118 (EPSH…EEYY), 126–160 (DKSH…KSEA), and 180–199 (SKDK…SKDH). 2 stretches are compositionally biased toward low complexity: residues 204 to 225 (KGAA…MGVS) and 233 to 246 (DAQN…SNNS). Residues 205–225 (GAAIGAGTAGVAGAAGAMGVS) form a helical membrane-spanning segment. Topologically, residues 226–319 (KAKKHSNDAQ…KERKKGGMAK (94 aa)) are cytoplasmic. The segment covering 247-259 (TEDKVSQDKSKDH) has biased composition (basic and acidic residues). A compositionally biased stretch (low complexity) spans 278–297 (GAASKSASAASKPHASNNAS). Over residues 299–314 (NHDEHDNHDRDKERKK) the composition is skewed to basic and acidic residues. The chain crosses the membrane as a helical span at residues 320-340 (VLLPLIAAVLIIGALAIFGGM). At 341-486 (ALNNHNNGTK…IRNGQQIVIP (146 aa)) the chain is on the extracellular side. Residues 351 to 440 (ENKIANTNKN…QRQGGGQRHT (90 aa)) form a disordered region. Residues 361 to 398 (NADESKDKDTSKDASKDKSKSTDSDKSKEDQDKATKDE) show a composition bias toward basic and acidic residues. The span at 403-431 (QNNANQANNQAQNNQNQQQANQNQQQQQQ) shows a compositional bias: low complexity. Residues 437–485 (QRHTVNGQENLYRIAIQYYGSGSPENVEKIRRANGLSGNNIRNGQQIVI) enclose the LysM domain.

Its subcellular location is the cell membrane. Its function is as follows. Promotes binding of soluble elastin peptides and tropoelastin to S.aureus cells although it is not able to promote bacterial adherence to immobilized elastin and, therefore, is not a microbial surface component recognizing adhesive matrix molecule (MSCRAMM). The chain is Elastin-binding protein EbpS (ebpS) from Staphylococcus aureus (strain MSSA476).